The chain runs to 211 residues: Octanoyltransferase (211 aa).

In terms of domain architecture, BPL/LPL catalytic spans 28 to 203; sequence GSAPETLLLV…HFQSLLKTWL (176 aa). Substrate is bound by residues 66–73, 133–135, and 146–148; these read RGGDITYH, SIG, and GFA. Cysteine 164 serves as the catalytic Acyl-thioester intermediate.

This sequence belongs to the LipB family.

It is found in the cytoplasm. It catalyses the reaction octanoyl-[ACP] + L-lysyl-[protein] = N(6)-octanoyl-L-lysyl-[protein] + holo-[ACP] + H(+). Its pathway is protein modification; protein lipoylation via endogenous pathway; protein N(6)-(lipoyl)lysine from octanoyl-[acyl-carrier-protein]: step 1/2. In terms of biological role, catalyzes the transfer of endogenously produced octanoic acid from octanoyl-acyl-carrier-protein onto the lipoyl domains of lipoate-dependent enzymes. Lipoyl-ACP can also act as a substrate although octanoyl-ACP is likely to be the physiological substrate. This Syntrophotalea carbinolica (strain DSM 2380 / NBRC 103641 / GraBd1) (Pelobacter carbinolicus) protein is Octanoyltransferase.